The following is a 417-amino-acid chain: Phosphoglycerate kinase (417 aa).

(2R)-3-phosphoglycerate contacts are provided by Val23, Asp24, Phe25, Asn26, Gln38, Arg39, Ser62, His63, Gly65, Arg66, Leu121, Arg122, His169, and Arg170. An ADP-binding site is contributed by Gly213. Gly213 provides a ligand contact to CDP. Residues Ala214 and Lys215 each contribute to the AMP site. Ala214 serves as a coordination point for ATP. Ala214 serves as a coordination point for Mg(2+). Asp218 is a CDP binding site. Asp218 lines the Mg(2+) pocket. Lys219 is an AMP binding site. Lys219 contributes to the ATP binding site. Residue Gly237 participates in ADP binding. CDP is bound at residue Gly237. The AMP site is built by Gly238 and Gly312. ATP is bound by residues Gly238 and Gly312. Gly337 and Phe342 together coordinate CDP. Phe342 serves as a coordination point for ADP. Position 343 (Glu343) interacts with AMP. Positions 343, 374, and 375 each coordinate ATP. Asp374 is a Mg(2+) binding site.

The protein belongs to the phosphoglycerate kinase family. As to quaternary structure, monomer. The cofactor is Mg(2+).

The protein localises to the cytoplasm. It is found in the mitochondrion. It catalyses the reaction (2R)-3-phosphoglycerate + ATP = (2R)-3-phospho-glyceroyl phosphate + ADP. It functions in the pathway carbohydrate degradation; glycolysis; pyruvate from D-glyceraldehyde 3-phosphate: step 2/5. Functionally, catalyzes one of the two ATP producing reactions in the glycolytic pathway via the reversible conversion of 1,3-diphosphoglycerate to 3-phosphoglycerate. Both L- and D- forms of purine and pyrimidine nucleotides can be used as substrates, but the activity is much lower on pyrimidines. Negatively regulates the biosynthesis of acetyl-CoA from pyruvate in the mitochondrion. This chain is Phosphoglycerate kinase (PGK1), found in Candida maltosa (Yeast).